Here is a 241-residue protein sequence, read N- to C-terminus: 2-C-methyl-D-erythritol 4-phosphate cytidylyltransferase (241 aa).

It belongs to the IspD/TarI cytidylyltransferase family. IspD subfamily.

The enzyme catalyses 2-C-methyl-D-erythritol 4-phosphate + CTP + H(+) = 4-CDP-2-C-methyl-D-erythritol + diphosphate. It functions in the pathway isoprenoid biosynthesis; isopentenyl diphosphate biosynthesis via DXP pathway; isopentenyl diphosphate from 1-deoxy-D-xylulose 5-phosphate: step 2/6. Catalyzes the formation of 4-diphosphocytidyl-2-C-methyl-D-erythritol from CTP and 2-C-methyl-D-erythritol 4-phosphate (MEP). The chain is 2-C-methyl-D-erythritol 4-phosphate cytidylyltransferase from Mycobacterium leprae (strain Br4923).